Reading from the N-terminus, the 123-residue chain is Large ribosomal subunit protein uL18 (123 aa).

Belongs to the universal ribosomal protein uL18 family. Part of the 50S ribosomal subunit; part of the 5S rRNA/L5/L18/L25 subcomplex. Contacts the 5S and 23S rRNAs.

This is one of the proteins that bind and probably mediate the attachment of the 5S RNA into the large ribosomal subunit, where it forms part of the central protuberance. The polypeptide is Large ribosomal subunit protein uL18 (Chlamydia trachomatis serovar A (strain ATCC VR-571B / DSM 19440 / HAR-13)).